A 231-amino-acid polypeptide reads, in one-letter code: Endonuclease NucS (231 aa).

Belongs to the NucS endonuclease family.

It is found in the cytoplasm. Functionally, cleaves both 3' and 5' ssDNA extremities of branched DNA structures. This chain is Endonuclease NucS, found in Kocuria rhizophila (strain ATCC 9341 / DSM 348 / NBRC 103217 / DC2201).